Consider the following 234-residue polypeptide: Two-component response regulator ARR9 (234 aa).

The Response regulatory domain maps to 10-147 (HVLAVDDSLF…DLNKLKPHMM (138 aa)). Aspartate 80 bears the 4-aspartylphosphate mark.

It belongs to the ARR family. Type-A subfamily. In terms of assembly, interacts with AHP1 and AHP3. Post-translationally, two-component system major event consists of a His-to-Asp phosphorelay between a sensor histidine kinase (HK) and a response regulator (RR). In plants, the His-to-Asp phosphorelay involves an additional intermediate named Histidine-containing phosphotransfer protein (HPt). This multistep phosphorelay consists of a His-Asp-His-Asp sequential transfer of a phosphate group between first a His and an Asp of the HK protein, followed by the transfer to a conserved His of the HPt protein and finally the transfer to an Asp in the receiver domain of the RR protein. As to expression, predominantly expressed in roots.

It is found in the nucleus. Its function is as follows. Functions as a response regulator involved in His-to-Asp phosphorelay signal transduction system. Phosphorylation of the Asp residue in the receiver domain activates the ability of the protein to promote the transcription of target genes. Type-A response regulators seem to act as negative regulators of the cytokinin signaling. The chain is Two-component response regulator ARR9 (ARR9) from Arabidopsis thaliana (Mouse-ear cress).